The following is an 878-amino-acid chain: Alanine--tRNA ligase (878 aa).

Zn(2+)-binding residues include H567, H571, C669, and H673.

Belongs to the class-II aminoacyl-tRNA synthetase family. The cofactor is Zn(2+).

Its subcellular location is the cytoplasm. It carries out the reaction tRNA(Ala) + L-alanine + ATP = L-alanyl-tRNA(Ala) + AMP + diphosphate. In terms of biological role, catalyzes the attachment of alanine to tRNA(Ala) in a two-step reaction: alanine is first activated by ATP to form Ala-AMP and then transferred to the acceptor end of tRNA(Ala). Also edits incorrectly charged Ser-tRNA(Ala) and Gly-tRNA(Ala) via its editing domain. The protein is Alanine--tRNA ligase of Rickettsia canadensis (strain McKiel).